We begin with the raw amino-acid sequence, 675 residues long: Methionine--tRNA ligase (675 aa).

Residues 12 to 22 (PYANGPIHLGH) carry the 'HIGH' region motif. Residues Cys-143, Cys-146, Cys-156, and Cys-159 each coordinate Zn(2+). The 'KMSKS' region motif lies at 328–332 (KMSKS). Residue Lys-331 coordinates ATP. In terms of domain architecture, tRNA-binding spans 574–675 (DFAKVDLRIA…QGAQPGMRVK (102 aa)).

The protein belongs to the class-I aminoacyl-tRNA synthetase family. MetG type 1 subfamily. Homodimer. Requires Zn(2+) as cofactor.

The protein localises to the cytoplasm. The catalysed reaction is tRNA(Met) + L-methionine + ATP = L-methionyl-tRNA(Met) + AMP + diphosphate. Is required not only for elongation of protein synthesis but also for the initiation of all mRNA translation through initiator tRNA(fMet) aminoacylation. This chain is Methionine--tRNA ligase, found in Alkalilimnicola ehrlichii (strain ATCC BAA-1101 / DSM 17681 / MLHE-1).